The sequence spans 405 residues: Glucose-1-phosphate adenylyltransferase (405 aa).

Residues Gly-164, 179–180 (EK), and Ser-197 contribute to the alpha-D-glucose 1-phosphate site.

Belongs to the bacterial/plant glucose-1-phosphate adenylyltransferase family. In terms of assembly, homotetramer.

It carries out the reaction alpha-D-glucose 1-phosphate + ATP + H(+) = ADP-alpha-D-glucose + diphosphate. Its pathway is glycan biosynthesis; glycogen biosynthesis. Involved in the biosynthesis of ADP-glucose, a building block required for the elongation reactions to produce glycogen. Catalyzes the reaction between ATP and alpha-D-glucose 1-phosphate (G1P) to produce pyrophosphate and ADP-Glc. The protein is Glucose-1-phosphate adenylyltransferase of Corynebacterium jeikeium (strain K411).